The primary structure comprises 189 residues: Peptide deformylase (189 aa).

2 residues coordinate Fe cation: cysteine 93 and histidine 135. Glutamate 136 is an active-site residue. Fe cation is bound at residue histidine 139.

Belongs to the polypeptide deformylase family. Requires Fe(2+) as cofactor.

It catalyses the reaction N-terminal N-formyl-L-methionyl-[peptide] + H2O = N-terminal L-methionyl-[peptide] + formate. Functionally, removes the formyl group from the N-terminal Met of newly synthesized proteins. Requires at least a dipeptide for an efficient rate of reaction. N-terminal L-methionine is a prerequisite for activity but the enzyme has broad specificity at other positions. The protein is Peptide deformylase of Karelsulcia muelleri (strain GWSS) (Sulcia muelleri).